We begin with the raw amino-acid sequence, 198 residues long: Holliday junction branch migration complex subunit RuvA (198 aa).

The interval 1–61 (MTLYKIGEIV…DYIQQTYGFK (61 aa)) is domain I. The segment at 62-139 (TFKERLLFTD…KIIQNKEVKK (78 aa)) is domain II. Residues 140-144 (FDDIT) form a flexible linker region. A domain III region spans residues 144-198 (TNIKELKQTLNKLGFKASDIDYAVNNISSTKELDLMVEESINLITTQMHANNQTT).

It belongs to the RuvA family. In terms of assembly, homotetramer. Forms an RuvA(8)-RuvB(12)-Holliday junction (HJ) complex. HJ DNA is sandwiched between 2 RuvA tetramers; dsDNA enters through RuvA and exits via RuvB. An RuvB hexamer assembles on each DNA strand where it exits the tetramer. Each RuvB hexamer is contacted by two RuvA subunits (via domain III) on 2 adjacent RuvB subunits; this complex drives branch migration. In the full resolvosome a probable DNA-RuvA(4)-RuvB(12)-RuvC(2) complex forms which resolves the HJ.

Its subcellular location is the cytoplasm. Functionally, the RuvA-RuvB-RuvC complex processes Holliday junction (HJ) DNA during genetic recombination and DNA repair, while the RuvA-RuvB complex plays an important role in the rescue of blocked DNA replication forks via replication fork reversal (RFR). RuvA specifically binds to HJ cruciform DNA, conferring on it an open structure. The RuvB hexamer acts as an ATP-dependent pump, pulling dsDNA into and through the RuvAB complex. HJ branch migration allows RuvC to scan DNA until it finds its consensus sequence, where it cleaves and resolves the cruciform DNA. This chain is Holliday junction branch migration complex subunit RuvA, found in Mycoplasmopsis synoviae (strain 53) (Mycoplasma synoviae).